We begin with the raw amino-acid sequence, 824 residues long: Leucine--tRNA ligase (824 aa).

The 'HIGH' region motif lies at 42–52 (PYPSGRIHMGH). The short motif at 581 to 585 (KMSKS) is the 'KMSKS' region element. Lys-584 contacts ATP.

Belongs to the class-I aminoacyl-tRNA synthetase family.

Its subcellular location is the cytoplasm. It catalyses the reaction tRNA(Leu) + L-leucine + ATP = L-leucyl-tRNA(Leu) + AMP + diphosphate. The polypeptide is Leucine--tRNA ligase (Geotalea uraniireducens (strain Rf4) (Geobacter uraniireducens)).